Here is a 152-residue protein sequence, read N- to C-terminus: Deoxyuridine 5'-triphosphate nucleotidohydrolase (152 aa).

Substrate contacts are provided by residues 71–73 (RSG), Asn84, 88–90 (LID), and Met98.

It belongs to the dUTPase family. The cofactor is Mg(2+).

It catalyses the reaction dUTP + H2O = dUMP + diphosphate + H(+). Its pathway is pyrimidine metabolism; dUMP biosynthesis; dUMP from dCTP (dUTP route): step 2/2. Functionally, this enzyme is involved in nucleotide metabolism: it produces dUMP, the immediate precursor of thymidine nucleotides and it decreases the intracellular concentration of dUTP so that uracil cannot be incorporated into DNA. The polypeptide is Deoxyuridine 5'-triphosphate nucleotidohydrolase (Aeromonas salmonicida (strain A449)).